A 103-amino-acid polypeptide reads, in one-letter code: Large ribosomal subunit protein uL24 (103 aa).

It belongs to the universal ribosomal protein uL24 family. As to quaternary structure, part of the 50S ribosomal subunit.

In terms of biological role, one of two assembly initiator proteins, it binds directly to the 5'-end of the 23S rRNA, where it nucleates assembly of the 50S subunit. One of the proteins that surrounds the polypeptide exit tunnel on the outside of the subunit. This is Large ribosomal subunit protein uL24 from Pasteurella multocida (strain Pm70).